The following is a 271-amino-acid chain: Zinc finger CCHC domain-containing protein 9 (271 aa).

Residues 1–67 form a disordered region; sequence MTRWARVTTS…RKKNKKKKEY (67 aa). The segment covering 7–20 has biased composition (polar residues); that stretch reads VTTSNSKRPLSATS. The segment covering 22-33 has biased composition (basic and acidic residues); sequence EDMKKGSVERAD. Over residues 35–46 the composition is skewed to polar residues; that stretch reads SLPNRKQCQSSR. Residues 56 to 65 show a composition bias toward basic residues; the sequence is AKRKKNKKKK. 4 CCHC-type zinc fingers span residues 128-145, 155-172, 184-201, and 211-228; these read MVCF…DCPA, GICY…KCRA, AKCF…SCPD, and GSCK…DCRE.

As to expression, detected in brain cortex and in testis.

It is found in the nucleus. The protein localises to the nucleolus. Its function is as follows. May down-regulate transcription mediated by NF-kappa-B and the serum response element. This Mus musculus (Mouse) protein is Zinc finger CCHC domain-containing protein 9 (Zcchc9).